Consider the following 125-residue polypeptide: MADLTKLVDELSSLTVLEAAELAKLLEEKWGVSAAAAVAVAAAPAAGGAAAAVEEQTEFTVVLANAGDKKIEVIKEVRAITGLGLKEAKDLVEGAPKPVKEGVAKDEAEKLKAQLEKAGAKVELK.

The protein belongs to the bacterial ribosomal protein bL12 family. Homodimer. Part of the ribosomal stalk of the 50S ribosomal subunit. Forms a multimeric L10(L12)X complex, where L10 forms an elongated spine to which 2 to 4 L12 dimers bind in a sequential fashion. Binds GTP-bound translation factors.

Forms part of the ribosomal stalk which helps the ribosome interact with GTP-bound translation factors. Is thus essential for accurate translation. In Azorhizobium caulinodans (strain ATCC 43989 / DSM 5975 / JCM 20966 / LMG 6465 / NBRC 14845 / NCIMB 13405 / ORS 571), this protein is Large ribosomal subunit protein bL12.